Here is a 56-residue protein sequence, read N- to C-terminus: Bacteriocin sublancin-168 (56 aa).

Positions 1 to 19 are excised as a propeptide; sequence MEKLFKEVKLEELENQKGS. 2 disulfide bridges follow: C26/C55 and C33/C48. C41 carries S-linked (Glc) cysteine; by host glycosylation.

In terms of assembly, monomer. Production of active sublancin-168 requires at least one thiol-disulfide oxidoreductase (BdbB or, in its absence, BdbC). Membrane translocation and cleavage of the precursor are probably performed by SunT.

It is found in the secreted. Functionally, bacteriocin active against Gram-positive bacteria. Inhibits B.cereus spore outgrowth, after the germination stage, approximately 1000-fold better than it inhibits exponential growth of the same cells. Inhibits B.subtilis strain ATCC 6633. The sequence is that of Bacteriocin sublancin-168 (sunA) from Bacillus pumilus (Bacillus mesentericus).